The following is a 368-amino-acid chain: MGILEKVQPIEVMLPERYQTMSILEMEERVREIKEKMGALLFIPGHHYQKDEVVQFSDAAGDSLQLAQVAANNKEAKYIVFCGVHFMAETADMLTTDDQIVILPDMRAGCSMADMADIEQTERAWKELAKLFGDTMIPLTYVNSTAAIKAFCGRNGGATVTSSNAKQMVSWAFTQKERLVFLPDQHLGRNTAYDLGIPLEKMAVWNPHTDSLEYDGDIEEIQVILWKGHCSVHQNFTVKNIENVRKNHPDMNIIVHPECCYEVVAASDYAGSTKYIIDMIEAAPAGSKWAIGTEMNLVNRIIQQHPDKEIISLNPFMCPCLTMNRIDLPHLLWALENIERGEQINVIRVEKQVTEEAVLALNRMLERV.

Iminosuccinate is bound by residues H46 and S63. C110 is a binding site for [4Fe-4S] cluster. Iminosuccinate-binding positions include 141–143 (YVN) and S162. C230 lines the [4Fe-4S] cluster pocket. Iminosuccinate-binding positions include 256-258 (HPE) and T273. C320 contacts [4Fe-4S] cluster.

The protein belongs to the quinolinate synthase family. Type 3 subfamily. Requires [4Fe-4S] cluster as cofactor.

It is found in the cytoplasm. It catalyses the reaction iminosuccinate + dihydroxyacetone phosphate = quinolinate + phosphate + 2 H2O + H(+). Its pathway is cofactor biosynthesis; NAD(+) biosynthesis; quinolinate from iminoaspartate: step 1/1. Functionally, catalyzes the condensation of iminoaspartate with dihydroxyacetone phosphate to form quinolinate. The chain is Quinolinate synthase from Bacillus mycoides (strain KBAB4) (Bacillus weihenstephanensis).